The chain runs to 137 residues: Large ribosomal subunit protein uL16 (137 aa).

This sequence belongs to the universal ribosomal protein uL16 family. Part of the 50S ribosomal subunit.

Functionally, binds 23S rRNA and is also seen to make contacts with the A and possibly P site tRNAs. This chain is Large ribosomal subunit protein uL16, found in Rhizobium meliloti (strain 1021) (Ensifer meliloti).